The following is a 427-amino-acid chain: Gustatory receptor for sugar taste 43a (427 aa).

The Cytoplasmic portion of the chain corresponds to 1–37 (MEISQPSIGIFYISKVLALAPYATVRNSKGRVEIGRS). Residues 38–63 (WLFTVYSATLTVVMVFLTYRGLLFDA) traverse the membrane as a helical segment. At 64–75 (NSEIPVRMKSAT) the chain is on the extracellular side. Beta-D-fructose contacts are provided by R70 and D83. Residues 76–96 (SKVVTALDVSVVVMAIVSGVY) traverse the membrane as a helical segment. Residues 97–135 (CGLFSLNDTLELNDRLNKIDNTLNAYNNFRRDRWRALGM) are Cytoplasmic-facing. Residues 136-158 (AAVSLLAISILVGLDVGTWMRIA) form a helical membrane-spanning segment. Residues 159–168 (QDMNIAQSDT) are Extracellular-facing. A helical transmembrane segment spans residues 169 to 193 (ELNVHWYIPFYSLYFILTGLQVNIA). Y182 lines the beta-D-fructose pocket. Over 194-293 (NTAYGLGRRF…CVHLLSNSFG (100 aa)) the chain is Cytoplasmic. The chain crosses the membrane as a helical span at residues 294 to 316 (IAVLFILVSCLLHLVATAYFLFL). T310 is a beta-D-fructose binding site. The Extracellular segment spans residues 317–324 (ELLSKRDN). Residues 325-346 (GYLWVQMLWICFHFLRLLMVVE) traverse the membrane as a helical segment. H337 contacts beta-D-fructose. Topologically, residues 347-402 (PCHLAARESRKTIQIVCEIERKVHEPILAEAVKKFWQQLLVVDADFSACGLCRVNR) are cytoplasmic. Residues 403-423 (TILTSFASAIATYLVILIQFQ) traverse the membrane as a helical segment. Q421 is a binding site for Ca(2+). At 424–427 (RTNG) the chain is on the extracellular side.

Belongs to the insect chemoreceptor superfamily. Gustatory receptor (GR) family. Gr21a subfamily. Homotetramer. As to expression, expressed in the adult labellar chemosensory neurons and in the adult head, abdomen, leg and wing. In larvae, is expressed in taste organs, as well as the brain and the gastrointestinal system.

Its subcellular location is the cell membrane. In terms of biological role, gustatory receptor which mediates acceptance or avoidance behavior, depending on its substrates. Gr43a is the main sugar receptor in larvae. Functions as a narrowly tuned fructose receptor in taste neurons but also as a fructose receptor in the brain. Necessary and sufficient to sense hemolymph fructose and promote feeding in hungry flies but suppress feeding in satiated flies. The polypeptide is Gustatory receptor for sugar taste 43a (Gr43a) (Drosophila melanogaster (Fruit fly)).